We begin with the raw amino-acid sequence, 270 residues long: ES1 protein, mitochondrial (270 aa).

As to expression, expressed specifically in the inner segments of cone photoreceptor cells of the retina (at protein level).

The protein localises to the mitochondrion. Its function is as follows. Plays a role in promoting mitochondrial enlargement in cone photoreceptor cells in a fusion-independent and ATP-dependent manner. This chain is ES1 protein, mitochondrial, found in Danio rerio (Zebrafish).